A 299-amino-acid chain; its full sequence is Leucine zipper transcription factor-like protein 1 (299 aa).

Residues 96–299 are a coiled coil; the sequence is LKLQTDISEL…KRLAKYESED (204 aa). The interaction with BSS9 stretch occupies residues 145 to 299; the sequence is GTTELLNKEI…KRLAKYESED (155 aa).

The protein belongs to the LZTFL1 family. Self-associates. Interacts with BBS9; the interaction mediates the association of LZTL1 with the BBsome complex and regulates BBSome ciliary trafficking. In terms of tissue distribution, highly expressed in testis. Expressed in brain, cerebellum, eye, heart, kidney, liver, lung and trachea. In small intestine, graded expression along the crypt-villus axis with high levels in the villus apex and lower levels in the crypt stem cells (at protein level). Not expressed in skeletal muscle and white adipose tissue.

Its subcellular location is the cytoplasm. Functionally, regulates ciliary localization of the BBSome complex. Together with the BBSome complex, controls SMO ciliary trafficking and contributes to the sonic hedgehog (SHH) pathway regulation. May play a role in neurite outgrowth. May have tumor suppressor function. In Mus musculus (Mouse), this protein is Leucine zipper transcription factor-like protein 1 (Lztfl1).